The primary structure comprises 206 residues: Threonine efflux protein (206 aa).

The chain crosses the membrane as a helical span at residues 1 to 21 (MLMLFFTVAMVHIVALMSPGP). The Periplasmic segment spans residues 22–43 (DFFFVSQTAVSRSRKEAMMGVL). The helical transmembrane segment at 44–64 (GITCGVMVWAGVALLGLHLII) threads the bilayer. Topologically, residues 65-66 (EK) are cytoplasmic. Residues 67-87 (MAWLHTIIMVGGGLYLCWMGY) traverse the membrane as a helical segment. The Periplasmic portion of the chain corresponds to 88–149 (QMLRGALKKQ…VGDNVGAAAR (62 aa)). The chain crosses the membrane as a helical span at residues 150–173 (WGIFALITLETLAWFTVVASLFAL). Over 174-206 (PKMRRGYQRLAKWIDGFAGALFAGFGIHLIISR) the chain is Cytoplasmic.

Belongs to the Rht family.

The protein localises to the cell inner membrane. Its function is as follows. Conducts the efflux of threonine. This chain is Threonine efflux protein (rhtC), found in Salmonella typhi.